The chain runs to 1621 residues: Ferredoxin-dependent glutamate synthase, chloroplastic (1621 aa).

A chloroplast-targeting transit peptide spans M1–V57. C105 functions as the Nucleophile in the catalytic mechanism. One can recognise a Glutamine amidotransferase type-2 domain in the interval C105–S504. Residue L1183–R1240 participates in FMN binding. 3 residues coordinate [3Fe-4S] cluster: C1236, C1242, and C1247.

It belongs to the glutamate synthase family. Interacts with ferredoxin. Interacts (via FMN-binding domain) with SQD1. [3Fe-4S] cluster is required as a cofactor. It depends on FMN as a cofactor. Expressed in young leaves. Not detected in mature leaves.

The protein localises to the plastid. It localises to the chloroplast stroma. The catalysed reaction is 2 oxidized [2Fe-2S]-[ferredoxin] + 2 L-glutamate = L-glutamine + 2 reduced [2Fe-2S]-[ferredoxin] + 2-oxoglutarate + 2 H(+). It participates in amino-acid biosynthesis; L-glutamate biosynthesis via GLT pathway; L-glutamate from 2-oxoglutarate and L-glutamine (ferredoxin route): step 1/1. Its pathway is energy metabolism; nitrogen metabolism. Its activity is regulated as follows. Inhibited by N-bromosuccinimide, which is specific for modification of tryptophan residues probably involved in the electron transfer from ferredoxin. Its function is as follows. Catalyzes the reductive conversion of 2-oxoglutarate plus glutamine to two molecules of glutamate, using reduced ferredoxin as the electron donor. Contains one FMN but no FAD. The FMN-binding domain is also involved in the delivery of sulfite to the reaction center of SQD1. The polypeptide is Ferredoxin-dependent glutamate synthase, chloroplastic (Spinacia oleracea (Spinach)).